The following is a 107-amino-acid chain: Sulfurtransferase Alvin_2599 (107 aa).

A Rhodanese domain is found at 16-104 (DTEDVLLVDI…WARHGLPIVA (89 aa)). Cysteine 64 serves as the catalytic Cysteine persulfide intermediate.

Monomer.

Its subcellular location is the cytoplasm. The protein operates within energy metabolism; sulfur metabolism. Its function is as follows. Sulfur carrier protein involved in sulfur trafficking for oxidative dissimilatory sulfur metabolism. Component of a sulfur relay system that starts with the sulfur-mobilizing rhodanese-like protein Rhd_2599 (Alvin_2599), which transfers the sulfur from a low-molecular-weight thiol, maybe glutathione, to the TusA protein (Alvin_2600); TusA serves as the sulfur donor for DsrEFH, which persulfurates DsrC; persulfurated DsrC very probably serves as a direct substrate for reverse-acting sulfite reductase, DsrAB. Is able to catalyze the sulfur transfer reaction from thiosulfate or glutathione (GSSH) to cyanide in vitro, however, thiosulfate is unlikely an in vivo substrate. This Allochromatium vinosum (strain ATCC 17899 / DSM 180 / NBRC 103801 / NCIMB 10441 / D) (Chromatium vinosum) protein is Sulfurtransferase Alvin_2599.